A 1846-amino-acid chain; its full sequence is Insulin-like receptor (1846 aa).

Residues asparagine 113, asparagine 180, and asparagine 364 are each glycosylated (N-linked (GlcNAc...) asparagine). 5 disulfides stabilise this stretch: cysteine 371–cysteine 386, cysteine 393–cysteine 401, cysteine 397–cysteine 410, cysteine 413–cysteine 422, and cysteine 426–cysteine 438. A glycan (N-linked (GlcNAc...) asparagine) is linked at asparagine 453. 2 disulfides stabilise this stretch: cysteine 469/cysteine 483 and cysteine 486/cysteine 490. Residue asparagine 518 is glycosylated (N-linked (GlcNAc...) asparagine). Cysteines 615 and 646 form a disulfide. N-linked (GlcNAc...) asparagine glycans are attached at residues asparagine 652, asparagine 671, and asparagine 696. Fibronectin type-III domains are found at residues 775–869, 969–1067, and 1077–1179; these read TPDP…TMMG, KPSS…LKRT, and LNET…TPGF. A disordered region spans residues 944-980; it reads EKAENLGKAPKTLGGKKPLIHISKKKPSSSSTTSTPA. A compositionally biased stretch (basic residues) spans 961-970; that stretch reads PLIHISKKKP. The Extracellular segment spans residues 970–1183; that stretch reads PSSSSTTSTP…VMTPGFFTVE (214 aa). Low complexity predominate over residues 971–980; sequence SSSSTTSTPA. Residues asparagine 1017, asparagine 1047, asparagine 1078, asparagine 1087, and asparagine 1093 are each glycosylated (N-linked (GlcNAc...) asparagine). A helical membrane pass occupies residues 1184-1204; sequence IILGMLLVFLILMSIAGCIIY. Residues 1205-1846 are Cytoplasmic-facing; the sequence is YYIQVRYGKK…IEDNEHHPLV (642 aa). A Protein kinase domain is found at 1246–1528; it reads VVLGQQCGEG…LLAAEASPEF (283 aa). ATP contacts are provided by residues 1252 to 1260 and lysine 1282; that span reads CGEGSFGKV. Aspartate 1388 serves as the catalytic Proton acceptor. 2 disordered regions span residues 1718–1742 and 1769–1826; these read ISSM…TNWS and QQQQ…IFNG. Residues 1726-1742 are compositionally biased toward polar residues; the sequence is STGASSSSYGVPQTNWS. Residues 1808–1821 show a composition bias toward low complexity; sequence YRNNGSPSRNGNSR.

This sequence belongs to the protein kinase superfamily. Tyr protein kinase family. Insulin receptor subfamily. Tetramer of 2 alpha and 2 beta chains linked by disulfide bonds. The alpha chains contribute to the formation of the ligand-binding domain, while the beta chains carry the kinase domain. Interacts (via cytoplasmic domain) with shc-1 (PID domain). Interacts (via kinase domain) with daf-18 (via C-terminus). In terms of assembly, interacts with casy-1; promoting axonal localization. It depends on Mg(2+) as a cofactor.

It is found in the membrane. The protein resides in the cell projection. Its subcellular location is the axon. It catalyses the reaction L-tyrosyl-[protein] + ATP = O-phospho-L-tyrosyl-[protein] + ADP + H(+). Autophosphorylation activates the kinase activity. Interaction with shc-1 may inhibit its activity. Insulin receptor-like tyrosine kinase which regulates metabolism, controls longevity and prevents developmental arrest at the dauer stage. Binding of INS family members may either stimulate, or antagonize, association of the receptor with downstream mediators such as pdk-1 and age-1. Required for germline progenitor proliferation during larval development. Plays a role in maintaining gonad integrity in a daf-16/FOXO-dependent manner. Required for the response to environmental stimuli such as light, food, pheromone, and temperature. Negatively regulates resistance to UV and oxidative stress. In a daf-16/FOXO-dependent manner, plays a role in regulating the response to white light. Role in immune function and pathogen resistance. Negatively regulates autophagy. Regulates daf-18/PTEN protein levels. Plays a role in controlling seam cell development during the larval stages. In terms of biological role, required for taste avoidance learning in the cell body of ASER gustatory neurons. Functionally, required for taste avoidance learning in axons of ASER gustatory neurons. This Caenorhabditis elegans protein is Insulin-like receptor.